Here is a 248-residue protein sequence, read N- to C-terminus: Floral homeotic protein AGAMOUS (248 aa).

The MADS-box domain maps to 19–73; the sequence is RGKIEIKRIENTTNRQVTFCKRRNGLLKKAYELSVLCDAEVALIVFSSRGRLYEY. The K-box domain maps to 103–193; that stretch reads AQYYQQEASK…RAKIAETERA (91 aa). The disordered stretch occupies residues 196–219; it reads QQQQQQMNLMPGSSSYELVPPPHQ. The span at 202 to 211 shows a compositional bias: polar residues; the sequence is MNLMPGSSSY.

It is found in the nucleus. Probable transcription factor involved in regulating genes that determines stamen and carpel development in wild-type flowers. The polypeptide is Floral homeotic protein AGAMOUS (AG1) (Nicotiana tabacum (Common tobacco)).